Here is a 421-residue protein sequence, read N- to C-terminus: Gamma-glutamyl phosphate reductase (421 aa).

The protein belongs to the gamma-glutamyl phosphate reductase family.

The protein resides in the cytoplasm. It carries out the reaction L-glutamate 5-semialdehyde + phosphate + NADP(+) = L-glutamyl 5-phosphate + NADPH + H(+). It participates in amino-acid biosynthesis; L-proline biosynthesis; L-glutamate 5-semialdehyde from L-glutamate: step 2/2. Catalyzes the NADPH-dependent reduction of L-glutamate 5-phosphate into L-glutamate 5-semialdehyde and phosphate. The product spontaneously undergoes cyclization to form 1-pyrroline-5-carboxylate. The sequence is that of Gamma-glutamyl phosphate reductase from Acinetobacter baumannii (strain AYE).